The chain runs to 147 residues: Hemoglobin subunit gamma (147 aa).

Positions 3–147 (HFTAEEKAII…VATALAHKYH (145 aa)) constitute a Globin domain. H64 and H93 together coordinate heme b.

Belongs to the globin family. Heterotetramer of two alpha chains and two gamma chains in fetal hemoglobin (Hb F). Red blood cells.

In terms of biological role, gamma chains make up the fetal hemoglobin F, in combination with alpha chains. This is Hemoglobin subunit gamma (HBG) from Otolemur crassicaudatus (Brown greater galago).